Consider the following 22-residue polypeptide: GMASTAGSVLGKLAKAVAIGAL.

Residue Leu-22 is modified to Leucine amide.

Expressed by the skin glands.

The protein resides in the secreted. Antimicrobial peptide. This Xenopus boumbaensis (Mawa clawed frog) protein is Peptide PGLa-BM3.